The primary structure comprises 318 residues: 1-aminocyclopropane-1-carboxylate oxidase 1 (318 aa).

The region spanning 153–254 (PTFGTKVSNY…RMSIASFYNP (102 aa)) is the Fe2OG dioxygenase domain. Residues His-177, Asp-179, and His-234 each coordinate Fe cation.

This sequence belongs to the iron/ascorbate-dependent oxidoreductase family. It depends on Fe cation as a cofactor. Fruit.

The catalysed reaction is 1-aminocyclopropane-1-carboxylate + L-ascorbate + O2 = ethene + L-dehydroascorbate + hydrogen cyanide + CO2 + 2 H2O. It participates in alkene biosynthesis; ethylene biosynthesis via S-adenosyl-L-methionine; ethylene from S-adenosyl-L-methionine: step 2/2. The polypeptide is 1-aminocyclopropane-1-carboxylate oxidase 1 (ACO1) (Cucumis melo (Muskmelon)).